A 233-amino-acid polypeptide reads, in one-letter code: 7-cyano-7-deazaguanine synthase (233 aa).

Position 7–17 (7–17 (LSGGLDSAVTS)) interacts with ATP. Zn(2+) is bound by residues Cys-195, Cys-206, Cys-209, and Cys-212.

It belongs to the QueC family. It depends on Zn(2+) as a cofactor.

It catalyses the reaction 7-carboxy-7-deazaguanine + NH4(+) + ATP = 7-cyano-7-deazaguanine + ADP + phosphate + H2O + H(+). The protein operates within purine metabolism; 7-cyano-7-deazaguanine biosynthesis. In terms of biological role, catalyzes the ATP-dependent conversion of 7-carboxy-7-deazaguanine (CDG) to 7-cyano-7-deazaguanine (preQ(0)). This Methanococcus maripaludis (strain C7 / ATCC BAA-1331) protein is 7-cyano-7-deazaguanine synthase.